A 396-amino-acid polypeptide reads, in one-letter code: MSGPQHITILGATGSIGLSTLDVVARHPSRYQVFALTGFSRLDELLALCVRHTPQYAVVPDQFVARKLQDDLAAAVLDTRVLVGEGGLCEVAAHPRVDAVMAAIVGAAGLRPTLAAVEAGKKVLLANKEALVMSGDLFMQAVRQSGAVLLPIDSEHNAIFQCLPGDFARGLGAVGVRRIMLTASGGPFRETPLEQLQNVTPEQACAHPVWSMGRKISVDSATMMNKGLELIEACWLFDARPDQVEVVIHPQSVIHSLVDYVDGSVLAQLGNPDMRTPIANALAWPARVDSGVAPLDLFRIGQLDFQKPDEERFPCLRLARHAAEAGGSAPAMLNAANEVAVAAFLDGRIRYLEIAGIIEEVLNHEPVTAVEGLDAVFAADAKARLLAGQWLERNAR.

Residues T13, G14, S15, I16, and N127 each contribute to the NADPH site. K128 contacts 1-deoxy-D-xylulose 5-phosphate. E129 serves as a coordination point for NADPH. D153 serves as a coordination point for Mn(2+). S154, E155, S184, and H207 together coordinate 1-deoxy-D-xylulose 5-phosphate. Residue E155 coordinates Mn(2+). G213 contacts NADPH. S220, N225, K226, and E229 together coordinate 1-deoxy-D-xylulose 5-phosphate. E229 provides a ligand contact to Mn(2+).

This sequence belongs to the DXR family. It depends on Mg(2+) as a cofactor. Requires Mn(2+) as cofactor.

It carries out the reaction 2-C-methyl-D-erythritol 4-phosphate + NADP(+) = 1-deoxy-D-xylulose 5-phosphate + NADPH + H(+). Its pathway is isoprenoid biosynthesis; isopentenyl diphosphate biosynthesis via DXP pathway; isopentenyl diphosphate from 1-deoxy-D-xylulose 5-phosphate: step 1/6. Functionally, catalyzes the NADPH-dependent rearrangement and reduction of 1-deoxy-D-xylulose-5-phosphate (DXP) to 2-C-methyl-D-erythritol 4-phosphate (MEP). This Pseudomonas savastanoi pv. phaseolicola (strain 1448A / Race 6) (Pseudomonas syringae pv. phaseolicola (strain 1448A / Race 6)) protein is 1-deoxy-D-xylulose 5-phosphate reductoisomerase.